A 246-amino-acid chain; its full sequence is MDWQKITEKMCDFIQEKVKNSQSQGVVLGLSGGIDSALVATLCKRALKENVFAFLMPTQISNKTNLEDALRLCVDLNLEYKIIEIQSILDAFIKQSENTTLVSLGNFAARIRMSLLYDYSAMKNSLVIGTSNKSELLLGYGTIYGDLAYAFNPIGSLYKSEIYALAKYLNLHENFIKKTPSADLWENQTDEADLGFSYAKIDEGLKALETNDEKLLKILDPSLIAMLKNRMQKNAFKGKMPEILEI.

Residue 29–36 (GLSGGIDS) participates in ATP binding. Mg(2+) is bound at residue Asp-35. Arg-110 is a deamido-NAD(+) binding site. Residue Thr-130 participates in ATP binding. Glu-135 lines the Mg(2+) pocket. ATP is bound by residues Lys-159 and Ser-181.

It belongs to the NAD synthetase family. In terms of assembly, homodimer.

The catalysed reaction is deamido-NAD(+) + NH4(+) + ATP = AMP + diphosphate + NAD(+) + H(+). The protein operates within cofactor biosynthesis; NAD(+) biosynthesis; NAD(+) from deamido-NAD(+) (ammonia route): step 1/1. In terms of biological role, catalyzes the ATP-dependent amidation of deamido-NAD to form NAD. Uses ammonia as a nitrogen source. The protein is NH(3)-dependent NAD(+) synthetase of Campylobacter jejuni subsp. doylei (strain ATCC BAA-1458 / RM4099 / 269.97).